The following is a 113-amino-acid chain: Large ribosomal subunit protein uL24 (113 aa).

This sequence belongs to the universal ribosomal protein uL24 family. As to quaternary structure, part of the 50S ribosomal subunit.

One of two assembly initiator proteins, it binds directly to the 5'-end of the 23S rRNA, where it nucleates assembly of the 50S subunit. Functionally, one of the proteins that surrounds the polypeptide exit tunnel on the outside of the subunit. In Rickettsia prowazekii (strain Madrid E), this protein is Large ribosomal subunit protein uL24.